The chain runs to 123 residues: Small ribosomal subunit protein uS13 (123 aa).

The segment covering 99–113 (RGQRTHTNARTRKGG) has biased composition (basic residues). Residues 99-123 (RGQRTHTNARTRKGGSRLAVAAKKK) are disordered.

The protein belongs to the universal ribosomal protein uS13 family. As to quaternary structure, part of the 30S ribosomal subunit. Forms a loose heterodimer with protein S19. Forms two bridges to the 50S subunit in the 70S ribosome.

In terms of biological role, located at the top of the head of the 30S subunit, it contacts several helices of the 16S rRNA. In the 70S ribosome it contacts the 23S rRNA (bridge B1a) and protein L5 of the 50S subunit (bridge B1b), connecting the 2 subunits; these bridges are implicated in subunit movement. Contacts the tRNAs in the A and P-sites. The chain is Small ribosomal subunit protein uS13 from Anaplasma phagocytophilum (strain HZ).